A 298-amino-acid polypeptide reads, in one-letter code: Acetylglutamate kinase (298 aa).

Substrate contacts are provided by residues 61–62, Arg-83, and Asn-188; that span reads GG.

The protein belongs to the acetylglutamate kinase family. ArgB subfamily.

Its subcellular location is the cytoplasm. The enzyme catalyses N-acetyl-L-glutamate + ATP = N-acetyl-L-glutamyl 5-phosphate + ADP. It functions in the pathway amino-acid biosynthesis; L-arginine biosynthesis; N(2)-acetyl-L-ornithine from L-glutamate: step 2/4. Catalyzes the ATP-dependent phosphorylation of N-acetyl-L-glutamate. The chain is Acetylglutamate kinase from Syntrophobacter fumaroxidans (strain DSM 10017 / MPOB).